The chain runs to 489 residues: Cobyric acid synthase (489 aa).

Residues 247 to 439 enclose the GATase cobBQ-type domain; that stretch reads ALKVVVPVLP…IHGVFDEPAA (193 aa). The active-site Nucleophile is cysteine 328. The active site involves histidine 431.

It belongs to the CobB/CobQ family. CobQ subfamily.

It functions in the pathway cofactor biosynthesis; adenosylcobalamin biosynthesis. Its function is as follows. Catalyzes amidations at positions B, D, E, and G on adenosylcobyrinic A,C-diamide. NH(2) groups are provided by glutamine, and one molecule of ATP is hydrogenolyzed for each amidation. The polypeptide is Cobyric acid synthase (Marinobacter nauticus (strain ATCC 700491 / DSM 11845 / VT8) (Marinobacter aquaeolei)).